A 546-amino-acid polypeptide reads, in one-letter code: U3 small nucleolar RNA-associated protein 18 homolog (546 aa).

Disordered stretches follow at residues 1–55 (MSLS…LEES), 94–118 (SAVR…EENG), and 177–205 (NPGT…DGGV). The segment covering 13-23 (IKREELKKQYE) has biased composition (basic and acidic residues). The segment covering 24–35 (DVEDEEEIGSDD) has biased composition (acidic residues). At Ser-33 the chain carries Phosphoserine. Residues 45 to 55 (TEKEKQKLEES) are compositionally biased toward basic and acidic residues. 2 stretches are compositionally biased toward acidic residues: residues 101 to 117 (DYED…DEEN) and 193 to 205 (ESSD…DGGV). WD repeat units follow at residues 242 to 281 (PSNG…NTKI), 372 to 411 (KMNG…CLYK), 413 to 454 (VDEG…GGKR), and 509 to 545 (STMH…HYQN). A DWD box motif is present at residues 389–404 (LLSSGGDGQVYVWDLR).

The protein belongs to the WD repeat UTP18 family.

Its subcellular location is the nucleus. It localises to the nucleolus. Involved in nucleolar processing of pre-18S ribosomal RNA. This is U3 small nucleolar RNA-associated protein 18 homolog from Arabidopsis thaliana (Mouse-ear cress).